The following is a 396-amino-acid chain: F-box protein pof13 (396 aa).

The F-box domain occupies 40–89; sequence KNSNLFLLNRDIWSLIINYLDAFDILRLMHSSRQFYYWLRKSAVDECCFN.

As to quaternary structure, part of a SCF (SKP1-cullin-F-box) protein ligase complex. Interacts with skp1.

It localises to the cytoplasm. It participates in protein modification; protein ubiquitination. In Schizosaccharomyces pombe (strain 972 / ATCC 24843) (Fission yeast), this protein is F-box protein pof13 (pof13).